We begin with the raw amino-acid sequence, 508 residues long: Cyclin-A1-1 (508 aa).

A compositionally biased stretch (low complexity) spans Met-1–Val-28. Disordered regions lie at residues Met-1–Ala-40 and Val-82–Leu-125. Residues Gly-29 to Ala-39 show a composition bias toward gly residues. Low complexity predominate over residues Ala-98–Ala-111.

It belongs to the cyclin family. Cyclin AB subfamily. As to expression, expressed in the dividing region of the root cap and root apex. Expressed in the intercalary meristem of internodes and in adventitious roots under submergence conditions.

Involved in the control of the cell cycle at the G2/M (mitosis) transition. The chain is Cyclin-A1-1 (CYCA1-1) from Oryza sativa subsp. japonica (Rice).